Here is a 1531-residue protein sequence, read N- to C-terminus: DNA topoisomerase 2-alpha (1531 aa).

N-acetylmethionine is present on Met-1. A Phosphoserine modification is found at Ser-4. A Glycyl lysine isopeptide (Lys-Gly) (interchain with G-Cter in SUMO2) cross-link involves residue Lys-17. ATP-binding positions include Asn-91, Asn-120, and 148–150 (SSN). Glycyl lysine isopeptide (Lys-Gly) (interchain with G-Cter in SUMO2) cross-links involve residues Lys-156 and Lys-157. 161–168 (GRNGYGAK) is a binding site for ATP. A Glycyl lysine isopeptide (Lys-Gly) (interchain with G-Cter in SUMO2) cross-link involves residue Lys-261. Thr-282 is subject to Phosphothreonine. Residues 342–344 (KKK) form an interaction with DNA region. Lys-352 is covalently cross-linked (Glycyl lysine isopeptide (Lys-Gly) (interchain with G-Cter in SUMO2)). 376-378 (QTK) provides a ligand contact to ATP. Residues Lys-386, Lys-397, Lys-416, Lys-418, Lys-425, and Lys-440 each participate in a glycyl lysine isopeptide (Lys-Gly) (interchain with G-Cter in SUMO2) cross-link. One can recognise a Toprim domain in the interval 455 to 572 (CTLILTEGDS…SLLRHRFLEE (118 aa)). Glu-461 serves as a coordination point for Mg(2+). Residues Lys-466, Lys-480, and Lys-529 each participate in a glycyl lysine isopeptide (Lys-Gly) (interchain with G-Cter in SUMO2) cross-link. The Mg(2+) site is built by Asp-541 and Asp-543. Residues Lys-584, Lys-599, Lys-614, Lys-622, Lys-625, Lys-632, Lys-639, Lys-655, Lys-662, and Lys-676 each participate in a glycyl lysine isopeptide (Lys-Gly) (interchain with G-Cter in SUMO2) cross-link. Residues 715-1171 (IPSMVDGLKP…SPSDLWKEDL (457 aa)) form the Topo IIA-type catalytic domain. Tyr-805 functions as the O-(5'-phospho-DNA)-tyrosine intermediate in the catalytic mechanism. Positions 990–999 (KLQTSLTCNS) are interaction with DNA. The Nuclear export signal signature appears at 1018 to 1028 (ILRDFFELRLK). Lys-1075 participates in a covalent cross-link: Glycyl lysine isopeptide (Lys-Gly) (interchain with G-Cter in SUMO2). Disordered regions lie at residues 1090-1123 (WKEAQQKVPDEEENEESDNEKETEKSDSVTDSGP) and 1184-1531 (KEKQ…DDLF). A compositionally biased stretch (acidic residues) spans 1099–1108 (DEEENEESDN). At Ser-1106 the chain carries Phosphoserine; by CK1. Glycyl lysine isopeptide (Lys-Gly) (interchain with G-Cter in SUMO2) cross-links involve residues Lys-1114, Lys-1196, and Lys-1204. At Thr-1205 the chain carries Phosphothreonine. Ser-1213 is modified (phosphoserine). Lys-1228 participates in a covalent cross-link: Glycyl lysine isopeptide (Lys-Gly) (interchain with G-Cter in SUMO2). Lys-1240 is covalently cross-linked (Glycyl lysine isopeptide (Lys-Gly) (interchain with G-Cter in SUMO1); alternate). Lys-1240 participates in a covalent cross-link: Glycyl lysine isopeptide (Lys-Gly) (interchain with G-Cter in SUMO2); alternate. At Thr-1244 the chain carries Phosphothreonine. The residue at position 1247 (Ser-1247) is a Phosphoserine. Over residues 1256–1272 (EGLKQRLEKKQKREPGT) the composition is skewed to basic and acidic residues. Residues Lys-1259, Lys-1276, Lys-1283, and Lys-1286 each participate in a glycyl lysine isopeptide (Lys-Gly) (interchain with G-Cter in SUMO2) cross-link. Residues Ser-1295, Ser-1297, Ser-1299, and Ser-1302 each carry the phosphoserine modification. Thr-1327 is modified (phosphothreonine). A compositionally biased stretch (acidic residues) spans 1330-1349 (LDSDEDFSDFDEKTDDEDFV). Phosphoserine occurs at positions 1332 and 1337. Residue Thr-1343 is modified to Phosphothreonine; by PLK3. A phosphoserine mark is found at Ser-1351 and Ser-1354. Glycyl lysine isopeptide (Lys-Gly) (interchain with G-Cter in SUMO2) cross-links involve residues Lys-1363, Lys-1367, and Lys-1373. A phosphoserine mark is found at Ser-1374 and Ser-1377. Residue Lys-1385 forms a Glycyl lysine isopeptide (Lys-Gly) (interchain with G-Cter in SUMO2) linkage. Phosphoserine is present on residues Ser-1387, Ser-1391, Ser-1392, and Ser-1393. Low complexity predominate over residues 1406-1431 (TNPVPKKNVTVKKTAAKSQSSTSTTG). A Glycyl lysine isopeptide (Lys-Gly) (interchain with G-Cter in SUMO2); alternate cross-link involves residue Lys-1422. Lys-1422 is modified (N6-acetyllysine; alternate). The interval 1433 to 1439 (KKRAAPK) is interaction with PLSCR1. Lys-1442 participates in a covalent cross-link: Glycyl lysine isopeptide (Lys-Gly) (interchain with G-Cter in SUMO2); alternate. Lys-1442 is modified (N6-acetyllysine; alternate). Residue Ser-1449 is modified to Phosphoserine. Glycyl lysine isopeptide (Lys-Gly) (interchain with G-Cter in SUMO2) cross-links involve residues Lys-1454 and Lys-1459. Ser-1469 is modified (phosphoserine; by CK2). At Thr-1470 the chain carries Phosphothreonine. Phosphoserine is present on residues Ser-1471, Ser-1474, and Ser-1476. Glycyl lysine isopeptide (Lys-Gly) (interchain with G-Cter in SUMO2) cross-links involve residues Lys-1484 and Lys-1492. Residues 1491-1502 (SKGESDDFHMDF) show a composition bias toward basic and acidic residues. Ser-1495, Ser-1504, and Ser-1525 each carry phosphoserine.

Belongs to the type II topoisomerase family. Homodimer. Interacts with COPS5. Interacts with RECQL5; this stimulates DNA decatenation. Interacts with SETMAR; stimulates the topoisomerase activity. Interacts with DHX9; this interaction occurs in a E2 enzyme UBE2I- and RNA-dependent manner, negatively regulates DHX9-mediated double-stranded DNA and RNA duplex helicase activity and stimulates TOP2A-mediated supercoiled DNA relaxation activity. Interacts with HNRNPU (via C-terminus); this interaction protects the topoisomerase TOP2A from degradation and positively regulates the relaxation of supercoiled DNA in a RNA-dependent manner. Interacts with MCM3AP isoform GANP. Interacts with ERCC6. Interacts with PLSCR1. Interacts with GCNA; this interaction allows the resolution of topoisomerase II (TOP2A) DNA-protein cross-links. Interacts with POL1RA/RPA1 (via dock II) and UBTF in the context of Pol I complex; may assist Pol I transcription initiation by releasing supercoils occurring during DNA unwinding. Interacts with TPRN; TPRN interacts with a number of DNA damage response proteins, is recruited to sites of DNA damage and may play a role in DNA damage repair. Mg(2+) is required as a cofactor. It depends on Mn(2+) as a cofactor. Requires Ca(2+) as cofactor. Phosphorylation has no effect on catalytic activity. However, phosphorylation at Ser-1106 by CSNK1D/CK1 promotes DNA cleavable complex formation. In terms of processing, (Microbial infection) Deubiquitinated by Epstein-Barr virus BPLF1; leading to stabilized SUMOylated TOP2A trapped in cleavage complexes, which halts the DNA damage response to TOP2A-induced double-strand DNA breaks. Post-translationally, SUMOylated. Expressed in the tonsil, spleen, lymph node, thymus, skin, pancreas, testis, colon, kidney, liver, brain and lung. Also found in high-grade lymphomas, squamous cell lung tumors and seminomas.

It is found in the cytoplasm. The protein resides in the nucleus. It localises to the nucleoplasm. Its subcellular location is the nucleolus. It carries out the reaction ATP-dependent breakage, passage and rejoining of double-stranded DNA.. Its activity is regulated as follows. Specifically inhibited by the intercalating agent amsacrine. In terms of biological role, key decatenating enzyme that alters DNA topology by binding to two double-stranded DNA molecules, generating a double-stranded break in one of the strands, passing the intact strand through the broken strand, and religating the broken strand. May play a role in regulating the period length of BMAL1 transcriptional oscillation. This is DNA topoisomerase 2-alpha (TOP2A) from Homo sapiens (Human).